The sequence spans 1066 residues: Ubiquitin conjugation factor E4 A (1066 aa).

The disordered stretch occupies residues 33-57 (KEQLKQQSDELPASPDDSDNSVSES). N6-acetyllysine is present on K386. The 75-residue stretch at 987 to 1061 (DACDEFLDPI…QRWLAERKQQ (75 aa)) folds into the U-box domain.

The protein belongs to the ubiquitin conjugation factor E4 family.

It is found in the cytoplasm. It carries out the reaction S-ubiquitinyl-[E2 ubiquitin-conjugating enzyme]-L-cysteine + [acceptor protein]-L-lysine = [E2 ubiquitin-conjugating enzyme]-L-cysteine + N(6)-ubiquitinyl-[acceptor protein]-L-lysine.. It participates in protein modification; protein ubiquitination. In terms of biological role, ubiquitin-protein ligase that probably functions as an E3 ligase in conjunction with specific E1 and E2 ligases. May also function as an E4 ligase mediating the assembly of polyubiquitin chains on substrates ubiquitinated by another E3 ubiquitin ligase. Mediates 'Lys-48'-linked polyubiquitination of substrates. The sequence is that of Ubiquitin conjugation factor E4 A from Pongo abelii (Sumatran orangutan).